We begin with the raw amino-acid sequence, 237 residues long: Phosphoribosylaminoimidazole-succinocarboxamide synthase (237 aa).

It belongs to the SAICAR synthetase family.

It carries out the reaction 5-amino-1-(5-phospho-D-ribosyl)imidazole-4-carboxylate + L-aspartate + ATP = (2S)-2-[5-amino-1-(5-phospho-beta-D-ribosyl)imidazole-4-carboxamido]succinate + ADP + phosphate + 2 H(+). It functions in the pathway purine metabolism; IMP biosynthesis via de novo pathway; 5-amino-1-(5-phospho-D-ribosyl)imidazole-4-carboxamide from 5-amino-1-(5-phospho-D-ribosyl)imidazole-4-carboxylate: step 1/2. The protein is Phosphoribosylaminoimidazole-succinocarboxamide synthase of Salmonella agona (strain SL483).